A 344-amino-acid chain; its full sequence is MSPQGPAVLSLGSLCLDTNQAPNWTGLQTLLQQLPPQDIDERYCLALGEEERAELQLFCARRKQEALGQGVARLVLPKLEGHTCEKCRELLKPGEYGVFAARAGEQRCWHQPCFACQACGQALINLIYFYHDGQLYCGRHHAELLRPRCPACDQLIFSWRCTEAEGQRWHENHFCCQDCAGPLGGGRYALPGGSPCCPSCFENRYSDAGSSWAGALEGQAFLGETGLDRTEGRDQTSVNSATLSRTLLAAAGGSSLQTQRGLPGSSPQQENRPGDKAEAPKGQEQCRLETIRDPKDTPFSTCSSSSDSEPEGFFLGERLPQSWKTPGSLQAEDSNASKTHCTMC.

The PET domain maps to 1–81; that stretch reads MSPQGPAVLS…ARLVLPKLEG (81 aa). 2 consecutive LIM zinc-binding domains span residues 82–147 and 148–207; these read HTCE…LLRP and RCPA…RYSD. The segment at 253 to 344 is disordered; the sequence is GSSLQTQRGL…NASKTHCTMC (92 aa). The span at 257 to 271 shows a compositional bias: polar residues; the sequence is QTQRGLPGSSPQQEN. A compositionally biased stretch (basic and acidic residues) spans 272-296; the sequence is RPGDKAEAPKGQEQCRLETIRDPKD. Polar residues predominate over residues 322 to 344; sequence SWKTPGSLQAEDSNASKTHCTMC.

The protein belongs to the prickle / espinas / testin family. Expressed in a broad range of normal tissues as well as in hepatocellular carcinoma, breast cancer and prostate cancer tissues.

The sequence is that of Prickle-like protein 4 (PRICKLE4) from Homo sapiens (Human).